The chain runs to 302 residues: Sulfotransferase 1C4 (302 aa).

55–60 lines the 3'-phosphoadenylyl sulfate pocket; that stretch reads KAGTTW. 113 to 115 is a substrate binding site; that stretch reads KTH. The Proton acceptor role is filled by His115. Residues Arg137, Ser145, Tyr200, 234-239, and 262-266 each bind 3'-phosphoadenylyl sulfate; these read TSFDVM and FMRKG.

This sequence belongs to the sulfotransferase 1 family. Expressed at high levels in fetal lung and kidney and at low levels in fetal heart, adult kidney, ovary and spinal cord.

It is found in the cytoplasm. It localises to the cytosol. The enzyme catalyses a phenol + 3'-phosphoadenylyl sulfate = an aryl sulfate + adenosine 3',5'-bisphosphate + H(+). It carries out the reaction 17beta-estradiol + 3'-phosphoadenylyl sulfate = 17beta-estradiol 3-sulfate + adenosine 3',5'-bisphosphate + H(+). The catalysed reaction is bisphenol A + 3'-phosphoadenylyl sulfate = bisphenyl A sulfate + adenosine 3',5'-bisphosphate + H(+). Sulfotransferase that utilizes 3'-phospho-5'-adenylyl sulfate (PAPS) as sulfonate donor to catalyze the sulfate conjugation of phenolic compounds. Can also sulfonate estrogenic compounds, however, the dietary flavonoids (phytoestrogen) and environmental estrogens, like bisphenol A are better substrates than 17beta-estradiol (E2). Mediates the sulfation of doxorubicin and its analog epirubicin, two antitumor anthracyclines. This Homo sapiens (Human) protein is Sulfotransferase 1C4.